Here is a 322-residue protein sequence, read N- to C-terminus: Large ribosomal subunit protein uL15m (322 aa).

The transit peptide at 1–57 directs the protein to the mitochondrion; that stretch reads MKAERQTGLRNSFTTVIGRKLINTFVPSMMLTSVAGNDIFFRGLFKSPVLAFQSYRY. Residues 69–99 form a disordered region; it reads GSTKSFKRLGRGPSSGLGKTSGRGQKGQKAR. The segment covering 81–93 has biased composition (gly residues); the sequence is PSSGLGKTSGRGQ.

The protein belongs to the universal ribosomal protein uL15 family. In terms of assembly, component of the mitochondrial large ribosomal subunit (mt-LSU). Mature yeast 74S mitochondrial ribosomes consist of a small (37S) and a large (54S) subunit. The 37S small subunit contains a 15S ribosomal RNA (15S mt-rRNA) and 34 different proteins. The 54S large subunit contains a 21S rRNA (21S mt-rRNA) and 46 different proteins.

It localises to the mitochondrion. Component of the mitochondrial ribosome (mitoribosome), a dedicated translation machinery responsible for the synthesis of mitochondrial genome-encoded proteins, including at least some of the essential transmembrane subunits of the mitochondrial respiratory chain. The mitoribosomes are attached to the mitochondrial inner membrane and translation products are cotranslationally integrated into the membrane. The sequence is that of Large ribosomal subunit protein uL15m (MRPL10) from Saccharomyces cerevisiae (strain ATCC 204508 / S288c) (Baker's yeast).